Reading from the N-terminus, the 547-residue chain is Phospholipase DDHD1 (547 aa).

S184 is an active-site residue. A DDHD domain is found at 258 to 533; the sequence is LKFKVENFFC…ALFLLTFMYK (276 aa). A Phosphoserine modification is found at S370. The disordered stretch occupies residues 414–448; sequence RSSASQPSEPSKDSLEDDKKPSASPSTTTVATQTL. Positions 423 to 434 are enriched in basic and acidic residues; it reads PSKDSLEDDKKP. Residues 435–448 are compositionally biased toward low complexity; sequence SASPSTTTVATQTL.

The protein belongs to the PA-PLA1 family. Forms homooligomers and, to a much smaller extent, heterooligomers with DDHD2. Interacts with SEC23A and SEC24C. In terms of tissue distribution, predominantly expressed in testis, in round and elongating spermatids, but not in spermatocytes (at protein level). Also expressed in the brain, and at lower levels in other tissues such as thymus and lung (at protein level).

The protein resides in the cytoplasm. The enzyme catalyses a 1,2-diacyl-sn-glycero-3-phosphate + H2O = a 2-acyl-sn-glycerol 3-phosphate + a fatty acid + H(+). It catalyses the reaction a 1,2-diacyl-sn-glycero-3-phospho-(1D-myo-inositol) + H2O = a 2-acyl-sn-glycero-3-phospho-D-myo-inositol + a fatty acid + H(+). The catalysed reaction is 1-octadecanoyl-2-(5Z,8Z,11Z,14Z-eicosatetraenoyl)-sn-glycero-3-phospho-(1D-myo-inositol) + H2O = 2-(5Z,8Z,11Z,14Z-eicosatetraenoyl)-sn-glycero-3-phospho-(1D-myo-inositol) + octadecanoate + H(+). It carries out the reaction a 1-acyl-2-(5Z,8Z,11Z,14Z-eicosatetraenoyl)-sn-glycero-3-phospho-(1D-myo-inositol) + H2O = 2-(5Z,8Z,11Z,14Z-eicosatetraenoyl)-sn-glycero-3-phospho-(1D-myo-inositol) + a fatty acid + H(+). The enzyme catalyses 1,2-dihexadecanoyl-sn-glycero-3-phospho-(1D-myo-inositol) + H2O = 2-hexadecanoyl-sn-glycero-3-phospho-(1D-myo-inositol) + hexadecanoate + H(+). It catalyses the reaction a 1-acyl-2-(5Z,8Z,11Z,14Z)-eicosatetraenoyl-sn-glycero-3-phosphate + H2O = 2-(5Z,8Z,11Z,14Z-eicosatetraenoyl)-sn-glycero-3-phosphate + a fatty acid + H(+). The catalysed reaction is 1-(9Z-octadecenoyl)-2-(7Z,10Z,13Z,16Z,19Z-docosapentaenoyl)-sn-glycero-3-phospho-1D-myo-inositol + H2O = 2-(7Z,10Z,13Z,16Z,19Z-docosapentaenoyl)-sn-glycero-3-phospho-1D-myo-inositol + (9Z)-octadecenoate + H(+). It carries out the reaction 1-(9Z-octadecenoyl)-2-(5Z,8Z,11Z,14Z-eicosatetraenoyl)-sn-glycero-3-phospho-1D-myo-inositol + H2O = 2-(5Z,8Z,11Z,14Z-eicosatetraenoyl)-sn-glycero-3-phospho-(1D-myo-inositol) + (9Z)-octadecenoate + H(+). The enzyme catalyses 1,2-di-(9Z-octadecenoyl)-sn-glycero-3-phospho-1D-myo-inositol + H2O = 2-(9Z-octadecenoyl)-sn-glycero-3-phospho-1D-myo-inositol + (9Z)-octadecenoate + H(+). It catalyses the reaction 1-(9Z-octadecenoyl)-2-(8Z,11Z,14Z-eicosatrienoyl)-sn-glycero-3-phospho-1D-myo-inositol + H2O = 2-(8Z,11Z,14Z-eicosatrienoyl)-sn-glycero-3-phospho-1D-myo-inositol + (9Z)-octadecenoate + H(+). The catalysed reaction is 1,2-di-(9Z-octadecenoyl)-sn-glycero-3-phosphate + H2O = 2-(9Z-octadecenoyl)-sn-glycero-3-phosphate + (9Z)-octadecenoate + H(+). It carries out the reaction 1-hexadecanoyl-2-(9Z-octadecenoyl)-sn-glycero-3-phosphate + H2O = 2-(9Z-octadecenoyl)-sn-glycero-3-phosphate + hexadecanoate + H(+). The enzyme catalyses 1-hexadecanoyl-2-(9Z-octadecenoyl)-sn-glycero-3-phospho-L-serine + H2O = 2-(9Z-octadecenoyl)-sn-glycero-3-phospho-L-serine + hexadecanoate + H(+). It catalyses the reaction 1,2-di-(5Z,8Z,11Z,14Z)-eicosatetraenoyl-sn-glycero-3-phosphate + H2O = 2-(5Z,8Z,11Z,14Z-eicosatetraenoyl)-sn-glycero-3-phosphate + (5Z,8Z,11Z,14Z)-eicosatetraenoate + H(+). The catalysed reaction is 1-octadecanoyl-2-(5Z,8Z,11Z,14Z-eicosatetraenoyl)-sn-glycero-3-phosphate + H2O = 2-(5Z,8Z,11Z,14Z-eicosatetraenoyl)-sn-glycero-3-phosphate + octadecanoate + H(+). It carries out the reaction a 1,2-diacyl-sn-glycero-3-phospho-L-serine + H2O = a 2-acyl-sn-glycero-3-phospho-L-serine + a fatty acid + H(+). The enzyme catalyses a 1,2-diacyl-sn-glycero-3-phosphocholine + H2O = a 2-acyl-sn-glycero-3-phosphocholine + a fatty acid + H(+). It catalyses the reaction 1,2-di-(9Z-octadecenoyl)-sn-glycero-3-phosphocholine + H2O = (9Z-octadecenoyl)-sn-glycero-3-phosphocholine + (9Z)-octadecenoate + H(+). The catalysed reaction is a 1,2-diacyl-sn-glycero-3-phosphoethanolamine + H2O = a 2-acyl-sn-glycero-3-phosphoethanolamine + a fatty acid + H(+). It carries out the reaction a 1,2-diacyl-sn-glycero-3-phospho-(1'-sn-glycerol) + H2O = 2-acyl-sn-glycero-3-phospho-(1'-sn-glycerol) + a fatty acid + H(+). The enzyme catalyses 1-hexadecanoyl-2-(9Z-octadecenoyl)-sn-glycero-3-phospho-(1'-sn-glycerol) + H2O = 2-(9Z-octadecenoyl)-sn-glycero-3-phospho-(1'-sn-glycerol) + hexadecanoate + H(+). It catalyses the reaction 1-acyl-2-(5Z,8Z,11Z,14Z-eicosatetraenoyl)-sn-glycero-3-phosphocholine + H2O = 2-(5Z,8Z,11Z,14Z)-eicosatetraenoyl-sn-glycero-3-phosphocholine + a fatty acid + H(+). The catalysed reaction is 1-acyl-2-(5Z,8Z,11Z,14Z)-eicosatetraenoyl-sn-glycero-3-phosphoethanolamine + H2O = 2-(5Z,8Z,11Z,14Z)-eicosatetraenoyl-sn-glycero-3-phosphoethanolamine + a fatty acid + H(+). It participates in phospholipid metabolism; phosphatidylinositol metabolism. Functionally, phospholipase A1 (PLA1) that hydrolyzes ester bonds at the sn-1 position of glycerophospholipids producing a free fatty acid and a lysophospholipid. Prefers phosphatidate (1,2-diacyl-sn-glycero-3-phosphate, PA) as substrate in vitro, but can efficiently hydrolyze phosphatidylinositol (1,2-diacyl-sn-glycero-3-phospho-(1D-myo-inositol), PI), as well as a range of other glycerophospholipid substrates such as phosphatidylcholine (1,2-diacyl-sn-glycero-3-phosphocholine, PC), phosphatidylethanolamine (1,2-diacyl-sn-glycero-3-phosphoethanolamine, PE), phosphatidylserine (1,2-diacyl-sn-glycero-3-phospho-L-serine, PS) and phosphatidylglycerol (1,2-diacyl-sn-glycero-3-phospho-(1'-sn-glycerol), PG). Involved in the regulation of the endogenous content of polyunsaturated PI and PS lipids in the nervous system. Changes in these lipids extend to downstream metabolic products like PI phosphates PIP and PIP2, which play fundamental roles in cell biology. Regulates mitochondrial morphology. These dynamic changes may be due to PA hydrolysis at the mitochondrial surface. May play a regulatory role in spermatogenesis or sperm function. The protein is Phospholipase DDHD1 of Mus musculus (Mouse).